The following is a 192-amino-acid chain: T-cell surface glycoprotein CD3 epsilon chain (192 aa).

Residues 1–21 (MQSGNLWRALGLCLLLVGAWA) form the signal peptide. Residues 23–114 (DADEQKPYEV…QNCMEVNLME (92 aa)) are Extracellular-facing. An Ig-like domain is found at 26–97 (EQKPYEVSIS…EGNKEAAHTL (72 aa)). Cys-43 and Cys-84 are oxidised to a cystine. N-linked (GlcNAc...) asparagine glycosylation occurs at Asn-72. A helical membrane pass occupies residues 115-135 (VATIIVVDICVTLGLLLLVYY). The Cytoplasmic portion of the chain corresponds to 136–192 (WSKSRKAKASPMTRGAGAGGRPRGQNKGRPPPVPNPDYEPIRKGQRDLYAGLNQRGV). The disordered stretch occupies residues 145 to 180 (SPMTRGAGAGGRPRGQNKGRPPPVPNPDYEPIRKGQ). The interval 160-177 (QNKGRPPPVPNPDYEPIR) is NUMB-binding region. In terms of domain architecture, ITAM spans 163 to 190 (GRPPPVPNPDYEPIRKGQRDLYAGLNQR). Residues 164–171 (RPPPVPNP) are proline-rich sequence. 2 positions are modified to phosphotyrosine: Tyr-173 and Tyr-184.

In terms of assembly, the TCR-CD3 complex is composed of a CD3D/CD3E and a CD3G/CD3E heterodimers that preferentially associate with TCRalpha and TCRbeta, respectively, to form TCRalpha/CD3E/CD3G and TCRbeta/CD3G/CD3E trimers. In turn, the hexamer interacts with CD3Z homodimer to form the TCR-CD3 complex. Alternatively, TCRalpha and TCRbeta can be replaced by TCRgamma and TCRdelta. Interacts with CD6. Interacts (via Proline-rich sequence) with NCK1; the interaction is ligand dependent but independent of tyrosine kinase activation. Phosphorylated on Tyr residues after T-cell receptor triggering by LCK in association with CD4/CD8.

It is found in the cell membrane. In terms of biological role, part of the TCR-CD3 complex present on T-lymphocyte cell surface that plays an essential role in adaptive immune response. When antigen presenting cells (APCs) activate T-cell receptor (TCR), TCR-mediated signals are transmitted across the cell membrane by the CD3 chains CD3D, CD3E, CD3G and CD3Z. All CD3 chains contain immunoreceptor tyrosine-based activation motifs (ITAMs) in their cytoplasmic domain. Upon TCR engagement, these motifs become phosphorylated by Src family protein tyrosine kinases LCK and FYN, resulting in the activation of downstream signaling pathways. In addition of this role of signal transduction in T-cell activation, CD3E plays an essential role in correct T-cell development. Also participates in internalization and cell surface down-regulation of TCR-CD3 complexes via endocytosis sequences present in CD3E cytosolic region. In addition to its role as a TCR coreceptor, it serves as a receptor for ITPRIPL1. Ligand recognition inhibits T-cell activation by promoting interaction with NCK1, which prevents CD3E-ZAP70 interaction and blocks the ERK-NFkB signaling cascade and calcium influx. The sequence is that of T-cell surface glycoprotein CD3 epsilon chain (CD3E) from Bos taurus (Bovine).